We begin with the raw amino-acid sequence, 229 residues long: Cytochrome c oxidase subunit 2 (229 aa).

The Mitochondrial intermembrane segment spans residues 1 to 14; it reads MANPTHLGFQDAMS. A helical transmembrane segment spans residues 15–45; it reads PLMEELLYFHDHTLMILFLISSLVFYMIFAL. The Mitochondrial matrix segment spans residues 46–59; sequence LFPKLYYPNTSDVQ. A helical transmembrane segment spans residues 60–87; the sequence is EVEVIWTVLPAIVLISIALPSLRTLYLM. Over 88–229 the chain is Mitochondrial intermembrane; sequence DETNNPCLTI…QLWLEDSILS (142 aa). Residues His161, Cys196, Glu198, Cys200, His204, and Met207 each coordinate Cu cation. Glu198 contributes to the Mg(2+) binding site.

It belongs to the cytochrome c oxidase subunit 2 family. As to quaternary structure, component of the cytochrome c oxidase (complex IV, CIV), a multisubunit enzyme composed of 14 subunits. The complex is composed of a catalytic core of 3 subunits MT-CO1, MT-CO2 and MT-CO3, encoded in the mitochondrial DNA, and 11 supernumerary subunits COX4I, COX5A, COX5B, COX6A, COX6B, COX6C, COX7A, COX7B, COX7C, COX8 and NDUFA4, which are encoded in the nuclear genome. The complex exists as a monomer or a dimer and forms supercomplexes (SCs) in the inner mitochondrial membrane with NADH-ubiquinone oxidoreductase (complex I, CI) and ubiquinol-cytochrome c oxidoreductase (cytochrome b-c1 complex, complex III, CIII), resulting in different assemblies (supercomplex SCI(1)III(2)IV(1) and megacomplex MCI(2)III(2)IV(2)). Found in a complex with TMEM177, COA6, COX18, COX20, SCO1 and SCO2. Interacts with TMEM177 in a COX20-dependent manner. Interacts with COX20. Interacts with COX16. Requires Cu cation as cofactor.

Its subcellular location is the mitochondrion inner membrane. The enzyme catalyses 4 Fe(II)-[cytochrome c] + O2 + 8 H(+)(in) = 4 Fe(III)-[cytochrome c] + 2 H2O + 4 H(+)(out). In terms of biological role, component of the cytochrome c oxidase, the last enzyme in the mitochondrial electron transport chain which drives oxidative phosphorylation. The respiratory chain contains 3 multisubunit complexes succinate dehydrogenase (complex II, CII), ubiquinol-cytochrome c oxidoreductase (cytochrome b-c1 complex, complex III, CIII) and cytochrome c oxidase (complex IV, CIV), that cooperate to transfer electrons derived from NADH and succinate to molecular oxygen, creating an electrochemical gradient over the inner membrane that drives transmembrane transport and the ATP synthase. Cytochrome c oxidase is the component of the respiratory chain that catalyzes the reduction of oxygen to water. Electrons originating from reduced cytochrome c in the intermembrane space (IMS) are transferred via the dinuclear copper A center (CU(A)) of subunit 2 and heme A of subunit 1 to the active site in subunit 1, a binuclear center (BNC) formed by heme A3 and copper B (CU(B)). The BNC reduces molecular oxygen to 2 water molecules using 4 electrons from cytochrome c in the IMS and 4 protons from the mitochondrial matrix. The chain is Cytochrome c oxidase subunit 2 (MT-CO2) from Alligator mississippiensis (American alligator).